Reading from the N-terminus, the 675-residue chain is L-type lectin-domain containing receptor kinase IX.2 (675 aa).

Positions 1 to 35 are cleaved as a signal peptide; sequence MLYFIFCQNLSSSSSMSNSILFLSLFLFLPFVVDS. N-linked (GlcNAc...) asparagine glycosylation is found at Asn-9, Asn-39, Asn-110, Asn-146, Asn-179, Asn-186, Asn-191, and Asn-212. Positions 36 to 269 are legume-lectin like; it reads LYFNFTSFRQ…EEHRLLSWEL (234 aa). At 36-281 the chain is on the extracellular side; that stretch reads LYFNFTSFRQ…SLDSDKADSR (246 aa). A helical transmembrane segment spans residues 282–302; it reads IGLVIGISASGFVFLTFMVIT. The Cytoplasmic segment spans residues 303 to 675; the sequence is TVVVWSRKQR…VTFSGIEYGR (373 aa). In terms of domain architecture, Protein kinase spans 350–631; that stretch reads FSSHRKLGEG…KQGIQVMNFE (282 aa). Residues 356-364 and Lys-379 contribute to the ATP site; that span reads LGEGGFGAV. The active-site Proton acceptor is the Asp-475.

This sequence in the C-terminal section; belongs to the protein kinase superfamily. Ser/Thr protein kinase family. It in the N-terminal section; belongs to the leguminous lectin family. Interacts with ABCG40.

It localises to the cell membrane. The catalysed reaction is L-seryl-[protein] + ATP = O-phospho-L-seryl-[protein] + ADP + H(+). It carries out the reaction L-threonyl-[protein] + ATP = O-phospho-L-threonyl-[protein] + ADP + H(+). Functionally, promotes hydrogen peroxide H(2)O(2) production and cell death. Involved in resistance response to the pathogenic oomycetes Phytophthora infestans and Phytophthora capsici. This is L-type lectin-domain containing receptor kinase IX.2 from Arabidopsis thaliana (Mouse-ear cress).